Consider the following 196-residue polypeptide: Aequorin-1 (196 aa).

A propeptide spanning residues 1-7 is cleaved from the precursor; the sequence is MTSEQYS. 4 EF-hand domains span residues 18 to 53, 54 to 108, 111 to 146, and 147 to 182; these read KWIG…IVIN, NLGA…SKNQ, LIRL…DGII, and QSSE…FWYT. Residues Asp-31, Asn-33, Asn-35, Arg-37, and Glu-42 each coordinate Ca(2+). May interact with the chromophore regions lie at residues 47-57, 62-72, and 107-117; these read ASDIVINNLGA, AKRHKDAVEAF, and NQITLIRLWGD. Ca(2+) is bound by residues Asp-124, Asp-126, Asn-128, Glu-135, Asp-160, Asp-162, Ser-164, Gln-166, and Glu-171.

It belongs to the aequorin family. In terms of processing, the reduction of the disulfide bond is necessary to regenerate aequorin from apoaequorin.

In terms of biological role, ca(2+)-dependent bioluminescence photoprotein. Displays an emission peak at 470 nm (blue light). Trace amounts of calcium ion trigger the intramolecular oxidation of the chromophore, coelenterazine into coelenteramide and CO(2) with the concomitant emission of light. The sequence is that of Aequorin-1 from Aequorea victoria (Water jellyfish).